Consider the following 516-residue polypeptide: Maturase K (516 aa).

The protein belongs to the intron maturase 2 family. MatK subfamily.

The protein localises to the plastid. It is found in the chloroplast. Its function is as follows. Usually encoded in the trnK tRNA gene intron. Probably assists in splicing its own and other chloroplast group II introns. This chain is Maturase K, found in Cypripedium calceolus (Yellow lady's slipper).